A 253-amino-acid chain; its full sequence is 3-deoxy-manno-octulosonate cytidylyltransferase (253 aa).

It belongs to the KdsB family.

It localises to the cytoplasm. It carries out the reaction 3-deoxy-alpha-D-manno-oct-2-ulosonate + CTP = CMP-3-deoxy-beta-D-manno-octulosonate + diphosphate. Its pathway is nucleotide-sugar biosynthesis; CMP-3-deoxy-D-manno-octulosonate biosynthesis; CMP-3-deoxy-D-manno-octulosonate from 3-deoxy-D-manno-octulosonate and CTP: step 1/1. It functions in the pathway bacterial outer membrane biogenesis; lipopolysaccharide biosynthesis. Functionally, activates KDO (a required 8-carbon sugar) for incorporation into bacterial lipopolysaccharide in Gram-negative bacteria. The chain is 3-deoxy-manno-octulosonate cytidylyltransferase from Acinetobacter baumannii (strain ATCC 17978 / DSM 105126 / CIP 53.77 / LMG 1025 / NCDC KC755 / 5377).